The following is a 75-amino-acid chain: UPF0352 protein VP2129 (75 aa).

Belongs to the UPF0352 family.

The protein is UPF0352 protein VP2129 of Vibrio parahaemolyticus serotype O3:K6 (strain RIMD 2210633).